Consider the following 307-residue polypeptide: tRNA pseudouridine synthase B (307 aa).

Catalysis depends on Asp-38, which acts as the Nucleophile.

Belongs to the pseudouridine synthase TruB family. Type 1 subfamily.

It carries out the reaction uridine(55) in tRNA = pseudouridine(55) in tRNA. Functionally, responsible for synthesis of pseudouridine from uracil-55 in the psi GC loop of transfer RNAs. The polypeptide is tRNA pseudouridine synthase B (Lachnoclostridium phytofermentans (strain ATCC 700394 / DSM 18823 / ISDg) (Clostridium phytofermentans)).